A 380-amino-acid polypeptide reads, in one-letter code: Alpha-glucoside transport system permease protein AglG (380 aa).

The next 6 helical transmembrane spans lie at 13–33, 179–199, 202–222, 239–259, 288–308, and 344–364; these read VHLS…GLLI, VIPI…PFPG, VLLA…LIPL, TYMG…IYLL, IILP…FLWT, and EILT…FFAL. The ABC transmembrane type-1 domain occupies 167 to 364; sequence FLNSLTVAVP…VVPLIVFFAL (198 aa).

This sequence belongs to the binding-protein-dependent transport system permease family. MalFG subfamily.

It is found in the cell inner membrane. Its function is as follows. Part of the binding-protein-dependent transport system for alpha-glucosides such as sucrose, maltose and trehalose. Probably responsible for the translocation of the substrate across the membrane. This chain is Alpha-glucoside transport system permease protein AglG (aglG), found in Rhizobium meliloti (strain 1021) (Ensifer meliloti).